The chain runs to 1171 residues: ATP-dependent helicase/deoxyribonuclease subunit B (1171 aa).

The UvrD-like helicase ATP-binding domain occupies 1-390 (MSLRFVIGRA…HPLVECIRSA (390 aa)). 8-15 (GRAGSGKS) lines the ATP pocket. A UvrD-like helicase C-terminal domain is found at 281-587 (MEQPRFHSPA…QFANIPPSLD (307 aa)). Positions 805, 1129, 1132, and 1138 each coordinate [4Fe-4S] cluster.

The protein belongs to the helicase family. AddB/RexB type 1 subfamily. As to quaternary structure, heterodimer of AddA and AddB. Mg(2+) serves as cofactor. It depends on [4Fe-4S] cluster as a cofactor.

Functionally, the heterodimer acts as both an ATP-dependent DNA helicase and an ATP-dependent, dual-direction single-stranded exonuclease. Recognizes the chi site generating a DNA molecule suitable for the initiation of homologous recombination. The AddB subunit has 5' -&gt; 3' nuclease activity but not helicase activity. This chain is ATP-dependent helicase/deoxyribonuclease subunit B, found in Bacillus cereus (strain B4264).